The sequence spans 351 residues: Fe-S cluster assembly protein DRE2 (351 aa).

The tract at residues 1-151 (MATTGRVLLL…KPDIGAQQAI (151 aa)) is N-terminal SAM-like domain. Disordered regions lie at residues 93 to 118 (RNRE…RYND) and 157 to 186 (RRRK…PSSN). Composition is skewed to polar residues over residues 105 to 114 (GNGSNANSSR) and 167 to 186 (TLAS…PSSN). Positions 152–243 (PLKLSRRRKE…EDELLDEDDM (92 aa)) are linker. [2Fe-2S] cluster-binding residues include Cys-253, Cys-264, Cys-267, and Cys-269. The tract at residues 253-269 (CRPKPGKRRRACKDCSC) is fe-S binding site A. 4 residues coordinate [4Fe-4S] cluster: Cys-314, Cys-317, Cys-325, and Cys-328. 2 short sequence motifs (cx2C motif) span residues 314-317 (CGNC) and 325-328 (CDGC). The segment at 314-328 (CGNCSLGDAFRCDGC) is fe-S binding site B.

It belongs to the anamorsin family. Monomer. Interacts with TAH18. Interacts with MIA40. The cofactor is [2Fe-2S] cluster. [4Fe-4S] cluster serves as cofactor.

It is found in the cytoplasm. It localises to the mitochondrion intermembrane space. Component of the cytosolic iron-sulfur (Fe-S) protein assembly (CIA) machinery required for the maturation of extramitochondrial Fe-S proteins. Part of an electron transfer chain functioning in an early step of cytosolic Fe-S biogenesis, facilitating the de novo assembly of a [4Fe-4S] cluster on the scaffold complex CFD1-NBP35. Electrons are transferred to DRE2 from NADPH via the FAD- and FMN-containing protein TAH18. TAH18-DRE2 are also required for the assembly of the diferric tyrosyl radical cofactor of ribonucleotide reductase (RNR), probably by providing electrons for reduction during radical cofactor maturation in the catalytic small subunit RNR2. This Ajellomyces capsulatus (strain NAm1 / WU24) (Darling's disease fungus) protein is Fe-S cluster assembly protein DRE2.